The sequence spans 342 residues: Keratin-associated protein 29-1 (342 aa).

5 repeat units span residues 5–9 (CCPEN), 91–95 (CCASD), 239–243 (CCVPP), 309–313 (CCVTG), and 324–328 (CCPPT). Residues 5–328 (CCPENPTAVP…SSGPGCCPPT (324 aa)) form a 5 X 5 AA repeats of C-C-X(3) region.

It belongs to the KRTAP type 10 family.

This Mus musculus (Mouse) protein is Keratin-associated protein 29-1 (Krtap29-1).